The following is a 439-amino-acid chain: MATVLIVGKPNVGKSTLFNKLVRKRKAIVEDEEGVTRDPVQDTVEWYGKTFRLVDTCGVFDNPQDVISKKMKEVTLNMIREADLVLFVVDGKNGITKEDESLADFLRKSGVDVILVANKTENQRRFEREIKPELYRLGFGDPIPVSAEHSINLDTLMEKIIQKLEEKGLDLETKPEITEAIKIAIVGRPNVGKSTLFNAILNKERALVSPIPGTTRDPVDDEVFIDGKKYIFVDTAGLRRKSRIEPKTVERYSTYRVVESIERADVAVIVLDATQGITRQDQRIAGLVERKGKASVVVFNKWDLVEHREKRYDEFTKLFREKLYFVDYSPLIFTSADKGWGVEKIIDAINLAYSSYTTKVPSSALNSALQKVLAFTNLPRGLKIFFGLQVDIKPPTFLFFVNNTEKIKEPQKVFLRRLIREYVFPFEGSPIFLKFKKSR.

EngA-type G domains lie at 2–168 (ATVL…EEKG) and 181–357 (IKIA…SSYT). GTP contacts are provided by residues 8 to 15 (GKPNVGKS), 55 to 59 (DTCGV), 118 to 121 (NKTE), 187 to 194 (GRPNVGKS), 234 to 238 (DTAGL), and 300 to 303 (NKWD). A KH-like domain is found at 358 to 439 (TKVPSSALNS…PIFLKFKKSR (82 aa)).

The protein belongs to the TRAFAC class TrmE-Era-EngA-EngB-Septin-like GTPase superfamily. EngA (Der) GTPase family. Associates with the 50S ribosomal subunit.

In terms of biological role, GTPase that plays an essential role in the late steps of ribosome biogenesis. The protein is GTPase Der of Thermotoga neapolitana (strain ATCC 49049 / DSM 4359 / NBRC 107923 / NS-E).